The sequence spans 443 residues: Threonine/serine transporter TdcC (443 aa).

Transmembrane regions (helical) follow at residues 22-42 (TTWTLGLFGTAIGAGVLFFPI), 44-64 (AGFGGLIPILLMLVLAYPIAF), 97-117 (GVVITFLYFFAICPLLWIYGV), 140-160 (FVALFLLLLMAFVIWFGKDLM), 163-183 (VMSYLVWPFIASLVLISLSLI), 207-227 (ILITVWLGISIMVFSFNFSPI), 261-281 (MLMVAVVMFFAFSCLFTLSPA), 311-331 (FAITLEYAASIIALVAIFKSF), 366-386 (ISMIFIMGSTWVVAYANPNIL), 389-409 (IEAMGAPIIASLLCLLPMYAI), and 423-443 (DNVFVTVIGLLTILNIVYKLF).

Belongs to the amino acid/polyamine transporter 2 family. SdaC/TdcC subfamily.

It is found in the cell inner membrane. The catalysed reaction is L-threonine(in) + H(+)(in) = L-threonine(out) + H(+)(out). The enzyme catalyses L-serine(in) + H(+)(in) = L-serine(out) + H(+)(out). Involved in the import of threonine and serine into the cell, with the concomitant import of a proton (symport system). The sequence is that of Threonine/serine transporter TdcC from Shigella boydii serotype 18 (strain CDC 3083-94 / BS512).